Reading from the N-terminus, the 100-residue chain is Urease subunit gamma (100 aa).

Belongs to the urease gamma subunit family. Heterotrimer of UreA (gamma), UreB (beta) and UreC (alpha) subunits. Three heterotrimers associate to form the active enzyme.

It is found in the cytoplasm. It carries out the reaction urea + 2 H2O + H(+) = hydrogencarbonate + 2 NH4(+). The protein operates within nitrogen metabolism; urea degradation; CO(2) and NH(3) from urea (urease route): step 1/1. In Pseudomonas fluorescens (strain ATCC BAA-477 / NRRL B-23932 / Pf-5), this protein is Urease subunit gamma.